The following is a 450-amino-acid chain: tRNA-2-methylthio-N(6)-dimethylallyladenosine synthase (450 aa).

Residues 7 to 127 enclose the MTTase N-terminal domain; the sequence is KKVFIKTYGC…LPDVLARVRG (121 aa). The [4Fe-4S] cluster site is built by Cys-16, Cys-52, Cys-90, Cys-168, Cys-172, and Cys-175. The 235-residue stretch at 154–388 folds into the Radical SAM core domain; it reads IKRGVTAFLT…LLLKQQQGFG (235 aa). The TRAM domain occupies 389–450; the sequence is SSLVGSTIDT…GYNSLFAELA (62 aa).

This sequence belongs to the methylthiotransferase family. MiaB subfamily. Monomer. It depends on [4Fe-4S] cluster as a cofactor.

The protein resides in the cytoplasm. It catalyses the reaction N(6)-dimethylallyladenosine(37) in tRNA + (sulfur carrier)-SH + AH2 + 2 S-adenosyl-L-methionine = 2-methylsulfanyl-N(6)-dimethylallyladenosine(37) in tRNA + (sulfur carrier)-H + 5'-deoxyadenosine + L-methionine + A + S-adenosyl-L-homocysteine + 2 H(+). In terms of biological role, catalyzes the methylthiolation of N6-(dimethylallyl)adenosine (i(6)A), leading to the formation of 2-methylthio-N6-(dimethylallyl)adenosine (ms(2)i(6)A) at position 37 in tRNAs that read codons beginning with uridine. The chain is tRNA-2-methylthio-N(6)-dimethylallyladenosine synthase from Mesorhizobium japonicum (strain LMG 29417 / CECT 9101 / MAFF 303099) (Mesorhizobium loti (strain MAFF 303099)).